The sequence spans 986 residues: Mediator of RNA polymerase II transcription subunit 24 (986 aa).

6 consecutive short sequence motifs (LXXLL motif) follow at residues 128–132, 341–345, 445–449, 554–558, 785–789, and 855–859; these read LNWLL, LTPLL, LDLLL, LVALL, LPNLL, and LMRLL.

The protein belongs to the Mediator complex subunit 24 family. Component of the Mediator complex.

The protein resides in the nucleus. Its function is as follows. Component of the Mediator complex, a coactivator involved in the regulated transcription of nearly all RNA polymerase II-dependent genes. Mediator functions as a bridge to convey information from gene-specific regulatory proteins to the basal RNA polymerase II transcription machinery. Mediator is recruited to promoters by direct interactions with regulatory proteins and serves as a scaffold for the assembly of a functional preinitiation complex with RNA polymerase II and the general transcription factors. This Gallus gallus (Chicken) protein is Mediator of RNA polymerase II transcription subunit 24 (MED24).